The primary structure comprises 348 residues: Fructose-1,6-bisphosphatase class 1 (348 aa).

The Mg(2+) site is built by Glu92, Asp111, Leu113, and Asp114. Substrate-binding positions include 114–117 and Asn204; that span reads DGSS. Glu276 is a Mg(2+) binding site.

The protein belongs to the FBPase class 1 family. Homotetramer. Requires Mg(2+) as cofactor.

Its subcellular location is the cytoplasm. It carries out the reaction beta-D-fructose 1,6-bisphosphate + H2O = beta-D-fructose 6-phosphate + phosphate. The protein operates within carbohydrate biosynthesis; gluconeogenesis. The protein is Fructose-1,6-bisphosphatase class 1 of Methylorubrum extorquens (strain PA1) (Methylobacterium extorquens).